Here is a 120-residue protein sequence, read N- to C-terminus: Ribosome-binding factor A (120 aa).

The protein belongs to the RbfA family. In terms of assembly, monomer. Binds 30S ribosomal subunits, but not 50S ribosomal subunits or 70S ribosomes.

It localises to the cytoplasm. One of several proteins that assist in the late maturation steps of the functional core of the 30S ribosomal subunit. Associates with free 30S ribosomal subunits (but not with 30S subunits that are part of 70S ribosomes or polysomes). Required for efficient processing of 16S rRNA. May interact with the 5'-terminal helix region of 16S rRNA. This is Ribosome-binding factor A from Clostridium botulinum (strain Okra / Type B1).